A 266-amino-acid polypeptide reads, in one-letter code: MEGANGKQQKHFVLVHGAGHGAWCWYKLKPLLESSGHKVTAIDLVASGINAKRLDEVDTLHEYSLPLLELMAAIPPGEKVILVGHSFGGFSTAIAMEHYPEKISIAVFIASVMPDAVNPPSYFFNLVFEWSPKDEDPLDTKIEEYGSPDQPRTAIRYGPKYLSSKVYQNCTSEEIELANLLLRPISLFAEDLSKAKAFSAEGYGSVKRAYIICNEDKSFPVGFQHWLVENVGVIESKVIKGADHMAMISKPQQLRQCLQEIADKVV.

The AB hydrolase-1 domain maps to H11–S121. Catalysis depends on residues S86, D216, and H244.

Belongs to the AB hydrolase superfamily. As to quaternary structure, homodimer.

It carries out the reaction 17-dehydropreakuammicine + H2O = norfluorocurarine + methanol + CO2. Its pathway is alkaloid biosynthesis. In terms of biological role, hydrolase involved in the biosynthesis of curare monoterpene indole alkaloids (MIAs), natural products such as diaboline, a pharmacologically active compound used to regulate blood pressure. Curare alkaloids act as animal glycine receptor antagonists. Catalyzes the conversion of dehydropreakuammicine to norfluorocurarine. The protein is Norfluorocurarine synthase 1 of Strychnos sp.